Reading from the N-terminus, the 425-residue chain is COBRA-like protein 4 (425 aa).

A signal peptide spans 1-27 (MAIGVGGCCAVLLAAALLFSSPATTYA). N-linked (GlcNAc...) asparagine glycosylation is found at Asn36, Asn163, Asn171, Asn319, and Asn352.

This sequence belongs to the COBRA family.

In Oryza sativa subsp. japonica (Rice), this protein is COBRA-like protein 4 (BC1L9).